The following is a 1342-amino-acid chain: DNA-directed RNA polymerase subunit beta (1342 aa).

It belongs to the RNA polymerase beta chain family. As to quaternary structure, the RNAP catalytic core consists of 2 alpha, 1 beta, 1 beta' and 1 omega subunit. When a sigma factor is associated with the core the holoenzyme is formed, which can initiate transcription.

The enzyme catalyses RNA(n) + a ribonucleoside 5'-triphosphate = RNA(n+1) + diphosphate. DNA-dependent RNA polymerase catalyzes the transcription of DNA into RNA using the four ribonucleoside triphosphates as substrates. The protein is DNA-directed RNA polymerase subunit beta of Yersinia pestis bv. Antiqua (strain Angola).